The following is a 90-amino-acid chain: Putative membrane protein insertion efficiency factor (90 aa).

The segment at 68–90 (VPAHFSLRRNPQYKEEDHRGKKR) is disordered. A compositionally biased stretch (basic and acidic residues) spans 79-90 (QYKEEDHRGKKR).

It belongs to the UPF0161 family.

The protein localises to the cell membrane. Functionally, could be involved in insertion of integral membrane proteins into the membrane. This Lactiplantibacillus plantarum (strain ATCC BAA-793 / NCIMB 8826 / WCFS1) (Lactobacillus plantarum) protein is Putative membrane protein insertion efficiency factor.